Here is a 172-residue protein sequence, read N- to C-terminus: MPNPRVFFDMSVGGQPAGRIVMELFADTTPRTAENFRALCTGEKGTGRSGKPLHYKDSSFHRVIPGFMCQGGDFTAGNGTGGESIYGAKFADENFIKKHTGPGILSMANAGPNTNGSQFFICTAKTEWLDGKHVVFGQVVEGMDVVKAIEKVGSSSGRTAKKVVVEDCGQLS.

The region spanning 7 to 170 is the PPIase cyclophilin-type domain; that stretch reads FFDMSVGGQP…KKVVVEDCGQ (164 aa).

It belongs to the cyclophilin-type PPIase family. Post-translationally, not glycosylated. Expressed in pollen.

Its subcellular location is the cytoplasm. It catalyses the reaction [protein]-peptidylproline (omega=180) = [protein]-peptidylproline (omega=0). With respect to regulation, binds cyclosporin A (CsA). CsA mediates some of its effects via an inhibitory action on PPIase. Functionally, PPIases accelerate the folding of proteins. It catalyzes the cis-trans isomerization of proline imidic peptide bonds in oligopeptides. The sequence is that of Peptidyl-prolyl cis-trans isomerase (PCKR1) from Catharanthus roseus (Madagascar periwinkle).